We begin with the raw amino-acid sequence, 701 residues long: Polyribonucleotide nucleotidyltransferase (701 aa).

Aspartate 487 and aspartate 493 together coordinate Mg(2+). In terms of domain architecture, KH spans proline 554–isoleucine 613. In terms of domain architecture, S1 motif spans glycine 623–lysine 691.

This sequence belongs to the polyribonucleotide nucleotidyltransferase family. As to quaternary structure, component of the RNA degradosome, which is a multiprotein complex involved in RNA processing and mRNA degradation. It depends on Mg(2+) as a cofactor.

It is found in the cytoplasm. It catalyses the reaction RNA(n+1) + phosphate = RNA(n) + a ribonucleoside 5'-diphosphate. Involved in mRNA degradation. Catalyzes the phosphorolysis of single-stranded polyribonucleotides processively in the 3'- to 5'-direction. This chain is Polyribonucleotide nucleotidyltransferase, found in Pseudomonas putida (strain ATCC 47054 / DSM 6125 / CFBP 8728 / NCIMB 11950 / KT2440).